An 861-amino-acid polypeptide reads, in one-letter code: Leucine--tRNA ligase (861 aa).

The short motif at 42 to 52 (PYPSGRLHMGH) is the 'HIGH' region element. The short motif at 619 to 623 (KMSKS) is the 'KMSKS' region element. An ATP-binding site is contributed by Lys-622.

Belongs to the class-I aminoacyl-tRNA synthetase family.

The protein resides in the cytoplasm. It carries out the reaction tRNA(Leu) + L-leucine + ATP = L-leucyl-tRNA(Leu) + AMP + diphosphate. In Haemophilus influenzae (strain PittEE), this protein is Leucine--tRNA ligase.